Consider the following 195-residue polypeptide: Transcription repressor OFP17 (195 aa).

In terms of domain architecture, OVATE spans 130–190 (EDNAVEDACR…SRFYGELCRD (61 aa)).

The protein localises to the nucleus. Its function is as follows. Transcriptional repressor that may regulate multiple aspects of plant growth and development through the regulation of BEL1-LIKE (BLH) and KNOX TALE (KNAT) homeodomain transcription factors. This chain is Transcription repressor OFP17 (OFP17), found in Arabidopsis thaliana (Mouse-ear cress).